A 352-amino-acid chain; its full sequence is Phenylalanine--tRNA ligase alpha subunit (352 aa).

Glu-258 is a Mg(2+) binding site.

Belongs to the class-II aminoacyl-tRNA synthetase family. Phe-tRNA synthetase alpha subunit type 1 subfamily. Tetramer of two alpha and two beta subunits. It depends on Mg(2+) as a cofactor.

Its subcellular location is the cytoplasm. It catalyses the reaction tRNA(Phe) + L-phenylalanine + ATP = L-phenylalanyl-tRNA(Phe) + AMP + diphosphate + H(+). This Staphylococcus saprophyticus subsp. saprophyticus (strain ATCC 15305 / DSM 20229 / NCIMB 8711 / NCTC 7292 / S-41) protein is Phenylalanine--tRNA ligase alpha subunit.